Reading from the N-terminus, the 48-residue chain is ARRRHSMKKKRKSVRRRKTRKNQRKRKNSLGRSFKAHGFLKQPPRFRP.

A compositionally biased stretch (basic residues) spans 1 to 29 (ARRRHSMKKKRKSVRRRKTRKNQRKRKNS). The tract at residues 1 to 48 (ARRRHSMKKKRKSVRRRKTRKNQRKRKNSLGRSFKAHGFLKQPPRFRP) is disordered.

Testis.

The protein localises to the nucleus. Its subcellular location is the chromosome. Functionally, protamines substitute for histones in the chromatin of sperm during the haploid phase of spermatogenesis. They compact sperm DNA into a highly condensed, stable and inactive complex. The polypeptide is Sperm protamine R3 isoform 2 (Hydrolagus colliei (Spotted ratfish)).